The sequence spans 362 residues: 3-dehydroquinate synthase (362 aa).

Belongs to the archaeal-type DHQ synthase family.

The enzyme catalyses 2-amino-2,3,7-trideoxy-D-lyxo-hept-6-ulosonate + NAD(+) + H2O = 3-dehydroquinate + NH4(+) + NADH + H(+). Functionally, catalyzes the oxidative deamination and cyclization of 2-amino-3,7-dideoxy-D-threo-hept-6-ulosonic acid (ADH) to yield 3-dehydroquinate (DHQ), which is fed into the canonical shikimic pathway of aromatic amino acid biosynthesis. This Methanothrix thermoacetophila (strain DSM 6194 / JCM 14653 / NBRC 101360 / PT) (Methanosaeta thermophila) protein is 3-dehydroquinate synthase.